A 100-amino-acid chain; its full sequence is Large ribosomal subunit protein bL28 (100 aa).

It belongs to the bacterial ribosomal protein bL28 family.

The sequence is that of Large ribosomal subunit protein bL28 from Ehrlichia ruminantium (strain Gardel).